Reading from the N-terminus, the 178-residue chain is Nucleoside-triphosphatase THEP1 (178 aa).

ATP-binding positions include 7-14 (GEPGVGKT) and 102-109 (VIIIDEIG).

Belongs to the THEP1 NTPase family. Monomer.

The catalysed reaction is a ribonucleoside 5'-triphosphate + H2O = a ribonucleoside 5'-diphosphate + phosphate + H(+). In terms of biological role, has nucleotide phosphatase activity towards ATP, GTP, CTP, TTP and UTP. May hydrolyze nucleoside diphosphates with lower efficiency. Does not have kinase activity. The sequence is that of Nucleoside-triphosphatase THEP1 from Aquifex aeolicus (strain VF5).